We begin with the raw amino-acid sequence, 214 residues long: MDFNQVKVINHPLIQHKLTIMRKKETSTVKFRTLMHEVSMLLAYEVTRDLEIEYEEIETPLATMQSPVLKGKKLVFVSILRAGNGLLDGMLQLVPTARIGHIGLYRDPKTLEAVEYYFKLPEHTQDRDVIVVDPMLATGNSAIAAVKEVKALHPKSIKFLCLLASPEGISNFHGEHPDVPIFTAAIDEQLNDHGYIVPGLGDAGDRLYGTKLAH.

Residues R81, R106, and 133–141 (DPMLATGNS) each bind 5-phospho-alpha-D-ribose 1-diphosphate. Uracil-binding positions include I196 and 201–203 (GDA). D202 is a binding site for 5-phospho-alpha-D-ribose 1-diphosphate.

It belongs to the UPRTase family. Mg(2+) serves as cofactor.

The enzyme catalyses UMP + diphosphate = 5-phospho-alpha-D-ribose 1-diphosphate + uracil. It participates in pyrimidine metabolism; UMP biosynthesis via salvage pathway; UMP from uracil: step 1/1. With respect to regulation, allosterically activated by GTP. In terms of biological role, catalyzes the conversion of uracil and 5-phospho-alpha-D-ribose 1-diphosphate (PRPP) to UMP and diphosphate. This is Uracil phosphoribosyltransferase from Legionella pneumophila subsp. pneumophila (strain Philadelphia 1 / ATCC 33152 / DSM 7513).